Consider the following 85-residue polypeptide: Putative transmembrane protein ORF85 (85 aa).

A run of 2 helical transmembrane segments spans residues 12-32 (FPPT…KFLS) and 44-64 (LGII…GAGI).

It localises to the host membrane. The chain is Putative transmembrane protein ORF85 from Acidianus convivator (ABV).